Consider the following 80-residue polypeptide: Putative membrane protein insertion efficiency factor (80 aa).

It belongs to the UPF0161 family.

Its subcellular location is the cell inner membrane. Functionally, could be involved in insertion of integral membrane proteins into the membrane. This Paracoccus denitrificans (strain Pd 1222) protein is Putative membrane protein insertion efficiency factor.